We begin with the raw amino-acid sequence, 160 residues long: Eukaryotic translation initiation factor 5A-4 (160 aa).

Positions 1–12 are enriched in basic and acidic residues; the sequence is MSDEEHHFESKA. The interval 1-21 is disordered; the sequence is MSDEEHHFESKADAGASKTYP. Lys52 carries the hypusine modification.

This sequence belongs to the eIF-5A family. Post-translationally, lys-52 undergoes hypusination, a unique post-translational modification that consists in the addition of a butylamino group from spermidine to lysine side chain, leading to the formation of the unusual amino acid hypusine. eIF-5As are the only known proteins to undergo this modification, which is essential for their function.

In terms of biological role, translation factor that promotes translation elongation and termination, particularly upon ribosome stalling at specific amino acid sequence contexts. Binds between the exit (E) and peptidyl (P) site of the ribosome and promotes rescue of stalled ribosome: specifically required for efficient translation of polyproline-containing peptides as well as other motifs that stall the ribosome. Acts as a ribosome quality control (RQC) cofactor by joining the RQC complex to facilitate peptidyl transfer during CAT tailing step. The polypeptide is Eukaryotic translation initiation factor 5A-4 (Solanum lycopersicum (Tomato)).